A 397-amino-acid chain; its full sequence is Monooxygenase 1 (397 aa).

It belongs to the 3-hydroxybenzoate 6-hydroxylase family. As to quaternary structure, monomer. Requires FAD as cofactor. As to expression, expressed in seedlings, roots, leaves, flowers and siliques.

This Arabidopsis thaliana (Mouse-ear cress) protein is Monooxygenase 1.